A 428-amino-acid chain; its full sequence is 3-phosphoshikimate 1-carboxyvinyltransferase (428 aa).

Positions 23, 24, and 28 each coordinate 3-phosphoshikimate. A phosphoenolpyruvate-binding site is contributed by K23. G97 and R125 together coordinate phosphoenolpyruvate. Positions 170, 171, 172, 198, 314, 337, and 341 each coordinate 3-phosphoshikimate. Q172 contacts phosphoenolpyruvate. D314 functions as the Proton acceptor in the catalytic mechanism. Positions 345, 387, and 412 each coordinate phosphoenolpyruvate.

The protein belongs to the EPSP synthase family. Monomer.

The protein resides in the cytoplasm. It catalyses the reaction 3-phosphoshikimate + phosphoenolpyruvate = 5-O-(1-carboxyvinyl)-3-phosphoshikimate + phosphate. It participates in metabolic intermediate biosynthesis; chorismate biosynthesis; chorismate from D-erythrose 4-phosphate and phosphoenolpyruvate: step 6/7. In terms of biological role, catalyzes the transfer of the enolpyruvyl moiety of phosphoenolpyruvate (PEP) to the 5-hydroxyl of shikimate-3-phosphate (S3P) to produce enolpyruvyl shikimate-3-phosphate and inorganic phosphate. The chain is 3-phosphoshikimate 1-carboxyvinyltransferase from Yersinia pestis bv. Antiqua (strain Antiqua).